Consider the following 793-residue polypeptide: Probable alpha-fucosidase A (793 aa).

Residues 1–20 (MLISGSSAALCALALPFAAA) form the signal peptide. Residues Asn30, Asn83, Asn100, Asn104, Asn123, Asn179, Asn199, Asn234, Asn323, Asn597, Asn622, Asn660, and Asn757 are each glycosylated (N-linked (GlcNAc...) asparagine).

Belongs to the glycosyl hydrolase 95 family.

It localises to the secreted. The enzyme catalyses an alpha-L-fucoside + H2O = L-fucose + an alcohol. Its function is as follows. Alpha-fucosidase involved in degradation of fucosylated xyloglucans. Hydrolyzes alpha-1,2-linked fucose. The chain is Probable alpha-fucosidase A (afcA) from Aspergillus niger (strain ATCC MYA-4892 / CBS 513.88 / FGSC A1513).